The following is a 155-amino-acid chain: Ribonuclease HI (155 aa).

Residues 1–142 (MTKQVEIFTD…CDELARAAAE (142 aa)) form the RNase H type-1 domain. Mg(2+)-binding residues include aspartate 10, glutamate 48, aspartate 70, and aspartate 134.

It belongs to the RNase H family. In terms of assembly, monomer. The cofactor is Mg(2+).

It is found in the cytoplasm. The catalysed reaction is Endonucleolytic cleavage to 5'-phosphomonoester.. Endonuclease that specifically degrades the RNA of RNA-DNA hybrids. In Vibrio vulnificus (strain CMCP6), this protein is Ribonuclease HI.